The chain runs to 984 residues: MYCBP-associated protein (984 aa).

2 disordered regions span residues 61–88 and 218–240; these read LEAS…EEPE and GESK…PQHN. Residues 218-231 show a composition bias toward basic and acidic residues; the sequence is GESKQKAPKEEKRP. Position 613 is a phosphothreonine (T613). S619 is subject to Phosphoserine. Disordered stretches follow at residues 693 to 729 and 842 to 917; these read SPIS…KSIM and PEEQ…ASQD. Positions 862–910 are enriched in basic and acidic residues; sequence AGKEERKGAAQEKKQLGIKDKEDKKGAKLLGKEDRPNSKKHKAKDDKKV.

As to quaternary structure, interacts with MYCBP. As to expression, expressed specifically in testis.

It localises to the cytoplasm. Its subcellular location is the membrane. May play a role in spermatogenesis. May be involved in synaptic processes. The chain is MYCBP-associated protein from Homo sapiens (Human).